Consider the following 209-residue polypeptide: Protein lin-28 homolog A (209 aa).

Residues 1 to 31 form a disordered region; that stretch reads MGSVSNQQFAGGCAKAAEKAPEEAPPDAARA. Position 2 is an N-acetylglycine (Gly-2). Ser-3 bears the Phosphoserine mark. The CSD domain maps to 39-112; it reads HGAGICKWFN…GLESIRVTGP (74 aa). The tract at residues 113–136 is flexible linker; the sequence is GGVFCIGSERRPKGKNMQKRRSKG. A Phosphoserine modification is found at Ser-120. CCHC-type zinc fingers lie at residues 137–154 and 159–176; these read DRCYNCGGLDHHAKECKL and KKCHFCQSINHMVASCPL. Residues 177-209 are disordered; sequence KAQQGPSSQGKPAYFREEEEEIHSPALLPEAQN. Position 200 is a phosphoserine (Ser-200).

The protein belongs to the lin-28 family. As to quaternary structure, monomer. During skeletal muscle differentiation, associated with translation initiation complexes in the polysomal compartment. Directly interacts with EIF3S2. Interacts with NCL in an RNA-dependent manner. Interacts with TUT4 in the presence of pre-let-7 RNA. As to expression, expressed in embryonic stem cells (ES cells), spermatagonia and testis. Expressed in numerous epithelial tissues including the epithelia of the small intestine, the intralobular duct epithelium of the mammary gland and the epithelia of Henle's loop in the kidney and in the collecting duct (at protein level). Also expressed in the myocardium and skeletal muscle (at protein level).

The protein localises to the cytoplasm. It is found in the rough endoplasmic reticulum. It localises to the P-body. Its subcellular location is the stress granule. The protein resides in the nucleus. The protein localises to the nucleolus. In terms of biological role, RNA-binding protein that inhibits processing of pre-let-7 miRNAs and regulates translation of mRNAs that control developmental timing, pluripotency and metabolism. Seems to recognize a common structural G-quartet (G4) feature in its miRNA and mRNA targets. 'Translational enhancer' that drives specific mRNAs to polysomes and increases the efficiency of protein synthesis. Its association with the translational machinery and target mRNAs results in an increased number of initiation events per molecule of mRNA and, indirectly, in mRNA stabilization. Binds IGF2 mRNA, MYOD1 mRNA, ARBP/36B4 ribosomal protein mRNA and its own mRNA. Essential for skeletal muscle differentiation program through the translational up-regulation of IGF2 expression. Suppressor of microRNA (miRNA) biogenesis, including that of let-7, miR107, miR-143 and miR-200c. Specifically binds the miRNA precursors (pre-miRNAs), recognizing an 5'-GGAG-3' motif found in pre-miRNA terminal loop, and recruits TUT4 and TUT7 uridylyltransferaseS. This results in the terminal uridylation of target pre-miRNAs. Uridylated pre-miRNAs fail to be processed by Dicer and undergo degradation. The repression of let-7 expression is required for normal development and contributes to maintain the pluripotent state by preventing let-7-mediated differentiation of embryonic stem cells. Localized to the periendoplasmic reticulum area, binds to a large number of spliced mRNAs and inhibits the translation of mRNAs destined for the ER, reducing the synthesis of transmembrane proteins, ER or Golgi lumen proteins, and secretory proteins. Binds to and enhances the translation of mRNAs for several metabolic enzymes, such as PFKP, PDHA1 or SDHA, increasing glycolysis and oxidative phosphorylation. Which, with the let-7 repression may enhance tissue repair in adult tissue. In Mus musculus (Mouse), this protein is Protein lin-28 homolog A (Lin28a).